A 421-amino-acid polypeptide reads, in one-letter code: Eukaryotic translation initiation factor 3 subunit E (421 aa).

A PCI domain is found at 215 to 394 (FFQNDTKGKD…STVILNHPSV (180 aa)).

It belongs to the eIF-3 subunit E family. In terms of assembly, component of the eukaryotic translation initiation factor 3 (eIF-3) complex.

Its subcellular location is the cytoplasm. Component of the eukaryotic translation initiation factor 3 (eIF-3) complex, which is involved in protein synthesis of a specialized repertoire of mRNAs and, together with other initiation factors, stimulates binding of mRNA and methionyl-tRNAi to the 40S ribosome. The eIF-3 complex specifically targets and initiates translation of a subset of mRNAs involved in cell proliferation. The sequence is that of Eukaryotic translation initiation factor 3 subunit E from Yarrowia lipolytica (strain CLIB 122 / E 150) (Yeast).